Consider the following 451-residue polypeptide: MADVSTSMRLKLPVVCFILEIILIILFGALVQYDYETDAKEWHNQSHNDYENDFYFRYPSFQDVHVMIFIGFGFLMTFLQKYGFGSVGFNFLIAAFSLQWATLMQGFFHGMHGGKIHVGVESMINADFCTGSVLISFGAVLGKTSPIQLLTMAMFEVTLFAVNEFILLSLLGTRDAGGSMTIHTFGAYFGLMVTRILYRPHLDKSKHRNSSVYHSDLFAMIGTIYLWMFWPSFNSAITAHGDDQHRTALNTYYSLAACTLATYGMSAVTSHDGKLDMVHIQNAALAGGVAVGTAGEMMLTPFGSMIVGFLAGIISVLGFKFLSPILESKLKIQDTCGVHNLHGMPGVLGAIVGAVTAALATMDVYGKGMEDVFPAVADGSIDASKQGGVQALSLAITLGIALLGGLIVVFGTPPDTLCFEDGVYWEVPESEAPHEAQLTTVRTEETEKLSS.

At 1 to 11 the chain is on the cytoplasmic side; it reads MADVSTSMRLK. A helical transmembrane segment spans residues 12–32; it reads LPVVCFILEIILIILFGALVQ. Topologically, residues 33 to 63 are extracellular; that stretch reads YDYETDAKEWHNQSHNDYENDFYFRYPSFQD. A glycan (N-linked (GlcNAc...) asparagine) is linked at N44. The helical transmembrane segment at 64-84 threads the bilayer; that stretch reads VHVMIFIGFGFLMTFLQKYGF. Residues 85-87 lie on the Cytoplasmic side of the membrane; the sequence is GSV. The chain crosses the membrane as a helical span at residues 88–108; the sequence is GFNFLIAAFSLQWATLMQGFF. Topologically, residues 109 to 121 are extracellular; the sequence is HGMHGGKIHVGVE. Residues 122–142 form a helical membrane-spanning segment; the sequence is SMINADFCTGSVLISFGAVLG. The Cytoplasmic segment spans residues 143-151; sequence KTSPIQLLT. A helical transmembrane segment spans residues 152-172; sequence MAMFEVTLFAVNEFILLSLLG. Residues 173 to 176 are Extracellular-facing; sequence TRDA. A helical transmembrane segment spans residues 177–197; the sequence is GGSMTIHTFGAYFGLMVTRIL. The Cytoplasmic portion of the chain corresponds to 198–216; it reads YRPHLDKSKHRNSSVYHSD. Residues 217–237 form a helical membrane-spanning segment; the sequence is LFAMIGTIYLWMFWPSFNSAI. Over 238–247 the chain is Extracellular; the sequence is TAHGDDQHRT. A helical membrane pass occupies residues 248 to 270; it reads ALNTYYSLAACTLATYGMSAVTS. Residues 271–274 lie on the Cytoplasmic side of the membrane; it reads HDGK. The chain crosses the membrane as a helical span at residues 275 to 295; it reads LDMVHIQNAALAGGVAVGTAG. The Extracellular segment spans residues 296-298; it reads EMM. Residues 299 to 319 traverse the membrane as a helical segment; that stretch reads LTPFGSMIVGFLAGIISVLGF. Over 320–340 the chain is Cytoplasmic; it reads KFLSPILESKLKIQDTCGVHN. Residues 341 to 361 traverse the membrane as a helical segment; that stretch reads LHGMPGVLGAIVGAVTAALAT. Residues 362–390 are Extracellular-facing; the sequence is MDVYGKGMEDVFPAVADGSIDASKQGGVQ. Residues 391 to 411 traverse the membrane as a helical segment; the sequence is ALSLAITLGIALLGGLIVVFG. Residues 412 to 451 are Cytoplasmic-facing; the sequence is TPPDTLCFEDGVYWEVPESEAPHEAQLTTVRTEETEKLSS.

This sequence belongs to the ammonium transporter (TC 2.A.49) family. Rh subfamily.

Its subcellular location is the basolateral cell membrane. It is found in the cytoplasmic vesicle membrane. In terms of biological role, functions as an ammonia transporter. May play a role in the elimination of ammonia in the gill. This is Ammonium transporter Rh type B (rhbg) from Tetraodon nigroviridis (Spotted green pufferfish).